The sequence spans 296 residues: Homoserine kinase (296 aa).

Residue 92-102 (PQSRGLGSSAA) coordinates ATP.

Belongs to the GHMP kinase family. Homoserine kinase subfamily.

Its subcellular location is the cytoplasm. The enzyme catalyses L-homoserine + ATP = O-phospho-L-homoserine + ADP + H(+). It participates in amino-acid biosynthesis; L-threonine biosynthesis; L-threonine from L-aspartate: step 4/5. In terms of biological role, catalyzes the ATP-dependent phosphorylation of L-homoserine to L-homoserine phosphate. This chain is Homoserine kinase, found in Cutibacterium acnes (strain DSM 16379 / KPA171202) (Propionibacterium acnes).